The chain runs to 337 residues: Ketol-acid reductoisomerase (NADP(+)) (337 aa).

Residues 1-180 (MKIYYDTDVN…GGGRAGIIET (180 aa)) form the KARI N-terminal Rossmann domain. Residues 24–27 (YGSQ), R47, S51, and 81–84 (DELQ) contribute to the NADP(+) site. Residue H106 is part of the active site. NADP(+) is bound at residue G132. The KARI C-terminal knotted domain occupies 181 to 326 (TFKDETETDL…EKLRAMMPWL (146 aa)). Mg(2+) is bound by residues D189, E193, E225, and E229. S250 contacts substrate.

This sequence belongs to the ketol-acid reductoisomerase family. It depends on Mg(2+) as a cofactor.

The enzyme catalyses (2R)-2,3-dihydroxy-3-methylbutanoate + NADP(+) = (2S)-2-acetolactate + NADPH + H(+). It carries out the reaction (2R,3R)-2,3-dihydroxy-3-methylpentanoate + NADP(+) = (S)-2-ethyl-2-hydroxy-3-oxobutanoate + NADPH + H(+). Its pathway is amino-acid biosynthesis; L-isoleucine biosynthesis; L-isoleucine from 2-oxobutanoate: step 2/4. It functions in the pathway amino-acid biosynthesis; L-valine biosynthesis; L-valine from pyruvate: step 2/4. Involved in the biosynthesis of branched-chain amino acids (BCAA). Catalyzes an alkyl-migration followed by a ketol-acid reduction of (S)-2-acetolactate (S2AL) to yield (R)-2,3-dihydroxy-isovalerate. In the isomerase reaction, S2AL is rearranged via a Mg-dependent methyl migration to produce 3-hydroxy-3-methyl-2-ketobutyrate (HMKB). In the reductase reaction, this 2-ketoacid undergoes a metal-dependent reduction by NADPH to yield (R)-2,3-dihydroxy-isovalerate. The protein is Ketol-acid reductoisomerase (NADP(+)) of Thermodesulfovibrio yellowstonii (strain ATCC 51303 / DSM 11347 / YP87).